The following is an 836-amino-acid chain: Conserved oligomeric Golgi complex subunit 7 (836 aa).

Coiled-coil stretches lie at residues 29–49 (QDSLEKHLVDLEMKLQIASEE) and 107–127 (LARVDNVKQRMEAAYKTLQDA). The tract at residues 246–265 (KLANERSESQRLSSGDEFQS) is disordered.

It belongs to the COG7 family. Component of the conserved oligomeric Golgi complex which is composed of eight different subunits and is required for normal Golgi morphology and localization. Interacts with COG5 and COG6.

It localises to the golgi apparatus membrane. In terms of biological role, required for normal Golgi function. Necessary for embryo development and pigmentation, especially for the expansion of cells and organs, and for the formation of the organized shoot apical meristem (SAM). Probably involved in the generation of the extra-cellular matrix. The protein is Conserved oligomeric Golgi complex subunit 7 of Arabidopsis thaliana (Mouse-ear cress).